Reading from the N-terminus, the 464-residue chain is MGKRLLDKLWEKHIVATNENGLDLLYIDLHLVHEVTSPQAFEGLRLANRTVRRPDLTFATMDHNIPTKDVWNITDHIAKQQLDTLRANCKQFHISLADIGDEAQGIVHVIGPELGLTVPGKTIVCGDSHTATHGAFSALAFGIGTSEVEHVLATQTLWQRKPKAMGIELKGTLPKGVYAKDIILHILATYGVAVGTGYVMEFYGETIRSMEMEERMTLCNMAIEGGAKAGIIAPDEKTFAYVKGRKYAPKDFERAVEKWSELYTDSDAVYDMHISIDVSKLAPYVTWGTNPSMGIRIDEQLPAISDQNEERAFAYMGLKPKQSAYDIPIKHVFIGSCTNSRLSDLEIAAAIVKGKKVKDGVRALVVPGSQKVRQLAMEKGLHHIFEEAGFEWREPGCSMCLGMNPDQVPAGEHCASTSNRNFEGRQGKGARTHLVSPAMAAAAALYGHFVDVRKESYDGAISYS.

The [4Fe-4S] cluster site is built by C337, C397, and C400.

The protein belongs to the aconitase/IPM isomerase family. LeuC type 1 subfamily. Heterodimer of LeuC and LeuD. The cofactor is [4Fe-4S] cluster.

It carries out the reaction (2R,3S)-3-isopropylmalate = (2S)-2-isopropylmalate. Its pathway is amino-acid biosynthesis; L-leucine biosynthesis; L-leucine from 3-methyl-2-oxobutanoate: step 2/4. In terms of biological role, catalyzes the isomerization between 2-isopropylmalate and 3-isopropylmalate, via the formation of 2-isopropylmaleate. This Bacillus cytotoxicus (strain DSM 22905 / CIP 110041 / 391-98 / NVH 391-98) protein is 3-isopropylmalate dehydratase large subunit.